The sequence spans 388 residues: Chaperone protein DnaJ (388 aa).

Residues 5 to 69 enclose the J domain; it reads DYYDVLGVDK…QKRAQYDQFG (65 aa). Residues 145 to 227 form a CR-type zinc finger; the sequence is GKKTDITYTR…CHGQGTVDKK (83 aa). Residues Cys-158, Cys-161, Cys-175, Cys-178, Cys-201, Cys-204, Cys-215, and Cys-218 each coordinate Zn(2+). CXXCXGXG motif repeat units lie at residues 158-165, 175-182, 201-208, and 215-222; these read CPTCDGSG, CDKCHGSG, CDKCGGRG, and CQTCHGQG.

Belongs to the DnaJ family. In terms of assembly, homodimer. It depends on Zn(2+) as a cofactor.

It localises to the cytoplasm. In terms of biological role, participates actively in the response to hyperosmotic and heat shock by preventing the aggregation of stress-denatured proteins and by disaggregating proteins, also in an autonomous, DnaK-independent fashion. Unfolded proteins bind initially to DnaJ; upon interaction with the DnaJ-bound protein, DnaK hydrolyzes its bound ATP, resulting in the formation of a stable complex. GrpE releases ADP from DnaK; ATP binding to DnaK triggers the release of the substrate protein, thus completing the reaction cycle. Several rounds of ATP-dependent interactions between DnaJ, DnaK and GrpE are required for fully efficient folding. Also involved, together with DnaK and GrpE, in the DNA replication of plasmids through activation of initiation proteins. This chain is Chaperone protein DnaJ, found in Lactobacillus johnsonii (strain CNCM I-12250 / La1 / NCC 533).